Here is a 336-residue protein sequence, read N- to C-terminus: Ornithine carbamoyltransferase, catabolic (336 aa).

Carbamoyl phosphate is bound by residues 57–60 (STRT), Q84, R108, and 135–138 (HPTQ). L-ornithine is bound by residues N168, D232, and 236 to 237 (SM). Residues 274-275 (CL) and R321 contribute to the carbamoyl phosphate site.

Belongs to the aspartate/ornithine carbamoyltransferase superfamily. OTCase family.

It is found in the cytoplasm. The enzyme catalyses carbamoyl phosphate + L-ornithine = L-citrulline + phosphate + H(+). Its pathway is amino-acid degradation; L-arginine degradation via ADI pathway; carbamoyl phosphate from L-arginine: step 2/2. Reversibly catalyzes the transfer of the carbamoyl group from carbamoyl phosphate (CP) to the N(epsilon) atom of ornithine (ORN) to produce L-citrulline. This chain is Ornithine carbamoyltransferase, catabolic (arcB), found in Ectopseudomonas mendocina (Pseudomonas mendocina).